The primary structure comprises 531 residues: Acetate CoA-transferase YdiF (531 aa).

Glu-333 acts as the 5-glutamyl coenzyme A thioester intermediate in catalysis.

It belongs to the 3-oxoacid CoA-transferase family. In terms of assembly, homotetramer; dimer of dimers.

The catalysed reaction is an acyl-CoA + acetate = a carboxylate + acetyl-CoA. CoA transferase having broad substrate specificity for short-chain acyl-CoA thioesters with the activity decreasing when the length of the carboxylic acid chain exceeds four carbons. May play a role in short-chain fatty acid metabolism in E.coli. The protein is Acetate CoA-transferase YdiF (ydiF) of Escherichia coli (strain K12).